An 80-amino-acid chain; its full sequence is Kappa-actitoxin-Avd4f (80 aa).

The first 19 residues, 1-19 (MNKALFLCLVVLCAAVVFA), serve as a signal peptide directing secretion. Residues 20–31 (AEDLQKAKHAPF) constitute a propeptide that is removed on maturation. 3 cysteine pairs are disulfide-bonded: C41–C76, C43–C69, and C59–C77.

Belongs to the sea anemone type 3 (BDS) potassium channel toxin family. As to expression, moderately expressed in the ectodermal tissue from the distal and proximal tentacles, body wall, and oral disk.

The protein resides in the secreted. It is found in the nematocyst. Its function is as follows. Blocks Kv3 voltage-gated potassium channels. Reduces blood pressure. This Anemonia viridis (Snakelocks anemone) protein is Kappa-actitoxin-Avd4f.